Consider the following 384-residue polypeptide: MAKRDYYEVLGVARGASADEIKKAYRAKAKQLHPDRNKDCKVSEAAFKEVNEAYECLKDDQKKAAYDRFGHAAFENGGGGFGRGNGHGDFGSAFADVFEDLFGDMMGRRAGGGGRSRASRGQDLRYNLRVSLEEAYNGAQKTINVPGSVACAACNGTGAEGAVEPATCPTCSGMGKVRATQGFFTVERTCPTCSGHGQIVKNPCQECRGAGRVQKERTLSVNIPAGVETGTRIRLAGEGDAGMRGGPAGDLYIFIEVREHPIFMRDGRMLACQVPVSMTTAALGGEIEVPTIDGGRSRVKVPPGTQSGKQLRLRGKGMPPLRHGPGLNGEAGDMLIELAVETPVNLTARQKELLREFEAINADNNPQTQGFFQKIKGFWDEMKG.

Residues 5-70 (DYYEVLGVAR…QKKAAYDRFG (66 aa)) enclose the J domain. A CR-type zinc finger spans residues 138–216 (GAQKTINVPG…CRGAGRVQKE (79 aa)). 8 residues coordinate Zn(2+): C151, C154, C168, C171, C190, C193, C204, and C207. CXXCXGXG motif repeat units follow at residues 151–158 (CAACNGTG), 168–175 (CPTCSGMG), 190–197 (CPTCSGHG), and 204–211 (CQECRGAG). Residues 300-322 (KVPPGTQSGKQLRLRGKGMPPLR) are disordered.

Belongs to the DnaJ family. Homodimer. Zn(2+) is required as a cofactor.

Its subcellular location is the cytoplasm. Functionally, participates actively in the response to hyperosmotic and heat shock by preventing the aggregation of stress-denatured proteins and by disaggregating proteins, also in an autonomous, DnaK-independent fashion. Unfolded proteins bind initially to DnaJ; upon interaction with the DnaJ-bound protein, DnaK hydrolyzes its bound ATP, resulting in the formation of a stable complex. GrpE releases ADP from DnaK; ATP binding to DnaK triggers the release of the substrate protein, thus completing the reaction cycle. Several rounds of ATP-dependent interactions between DnaJ, DnaK and GrpE are required for fully efficient folding. Also involved, together with DnaK and GrpE, in the DNA replication of plasmids through activation of initiation proteins. This chain is Chaperone protein DnaJ, found in Paracoccus denitrificans (strain Pd 1222).